Here is a 115-residue protein sequence, read N- to C-terminus: NADH-ubiquinone oxidoreductase chain 3 (115 aa).

Transmembrane regions (helical) follow at residues phenylalanine 3–tryptophan 23, phenylalanine 55–leucine 75, and leucine 84–tyrosine 104.

Belongs to the complex I subunit 3 family. In terms of assembly, core subunit of respiratory chain NADH dehydrogenase (Complex I) which is composed of 45 different subunits. Interacts with TMEM186. Interacts with TMEM242.

Its subcellular location is the mitochondrion inner membrane. It carries out the reaction a ubiquinone + NADH + 5 H(+)(in) = a ubiquinol + NAD(+) + 4 H(+)(out). Its function is as follows. Core subunit of the mitochondrial membrane respiratory chain NADH dehydrogenase (Complex I) which catalyzes electron transfer from NADH through the respiratory chain, using ubiquinone as an electron acceptor. Essential for the catalytic activity of complex I. The polypeptide is NADH-ubiquinone oxidoreductase chain 3 (Pongo pygmaeus (Bornean orangutan)).